The chain runs to 189 residues: Insecticyanin-A (189 aa).

2 cysteine pairs are disulfide-bonded: cysteine 9/cysteine 119 and cysteine 43/cysteine 175.

Belongs to the calycin superfamily. Lipocalin family. In terms of assembly, homotetramer. In terms of tissue distribution, synthesized only in the caterpillars, apparently by the epidermis and secreted into the hemolymph. The protein is passed over from the larval hemolymph to that of pupae and adults and is sequestered in the eggs.

It localises to the secreted. In terms of biological role, this protein binds a chromophore: biliverdin IX, isomer gamma. Mixed with lipoprotein-bound carotenes, this blue protein provides hornworms with their green cryptic coloration which serves a camouflage. This is Insecticyanin-A (INSA) from Manduca sexta (Tobacco hawkmoth).